Consider the following 24-residue polypeptide: Iron-regulated 31 kDa protein (24 aa).

Its subcellular location is the periplasm. Its function is as follows. May be involved in iron uptake. This chain is Iron-regulated 31 kDa protein, found in Haemophilus influenzae.